Here is a 192-residue protein sequence, read N- to C-terminus: Fe/S biogenesis protein NfuA (192 aa).

2 residues coordinate [4Fe-4S] cluster: Cys-149 and Cys-152.

It belongs to the NfuA family. As to quaternary structure, homodimer. It depends on [4Fe-4S] cluster as a cofactor.

In terms of biological role, involved in iron-sulfur cluster biogenesis. Binds a 4Fe-4S cluster, can transfer this cluster to apoproteins, and thereby intervenes in the maturation of Fe/S proteins. Could also act as a scaffold/chaperone for damaged Fe/S proteins. The sequence is that of Fe/S biogenesis protein NfuA from Shewanella sp. (strain ANA-3).